The primary structure comprises 648 residues: Threonine--tRNA ligase (648 aa).

A TGS domain is found at 1–63 (MAQISLTFPD…TQDAAIAIHT (63 aa)). A catalytic region spans residues 247 to 544 (DHRKLGREMN…LIEEHAGKLP (298 aa)). Residues Cys344, His395, and His521 each coordinate Zn(2+).

Belongs to the class-II aminoacyl-tRNA synthetase family. In terms of assembly, homodimer. It depends on Zn(2+) as a cofactor.

Its subcellular location is the cytoplasm. The enzyme catalyses tRNA(Thr) + L-threonine + ATP = L-threonyl-tRNA(Thr) + AMP + diphosphate + H(+). In terms of biological role, catalyzes the attachment of threonine to tRNA(Thr) in a two-step reaction: L-threonine is first activated by ATP to form Thr-AMP and then transferred to the acceptor end of tRNA(Thr). Also edits incorrectly charged L-seryl-tRNA(Thr). In Ruegeria sp. (strain TM1040) (Silicibacter sp.), this protein is Threonine--tRNA ligase.